The primary structure comprises 354 residues: Probable L-ascorbate-6-phosphate lactonase UlaG (354 aa).

Belongs to the UlaG family. A divalent metal cation is required as a cofactor.

It localises to the cytoplasm. The catalysed reaction is L-ascorbate 6-phosphate + H2O = 3-dehydro-L-gulonate 6-phosphate. It participates in cofactor degradation; L-ascorbate degradation; D-xylulose 5-phosphate from L-ascorbate: step 1/4. Its function is as follows. Probably catalyzes the hydrolysis of L-ascorbate-6-P into 3-keto-L-gulonate-6-P. Is essential for L-ascorbate utilization under anaerobic conditions. This Escherichia coli O139:H28 (strain E24377A / ETEC) protein is Probable L-ascorbate-6-phosphate lactonase UlaG.